The chain runs to 81 residues: uncharacterized protein (81 aa).

Residues 1-58 (MPQSKQQFKRQGARQRDSKGKFVKARTGMATAPPAAVSTAAPTASTMTPTGSSTTATI) are disordered. Positions 30–58 (ATAPPAAVSTAAPTASTMTPTGSSTTATI) are enriched in low complexity.

This is an uncharacterized protein from Caenorhabditis elegans.